A 33-amino-acid polypeptide reads, in one-letter code: Protein YtiC (33 aa).

A helical membrane pass occupies residues 10–29 (FDMLSIYIIYKLIVSNNTWL).

It localises to the cell inner membrane. The protein is Protein YtiC of Escherichia coli (strain K12).